The chain runs to 377 residues: Chaperone protein DnaJ (377 aa).

In terms of domain architecture, J spans 5–69; it reads DYYEVLGVSK…NKRANYDQFG (65 aa). Residues 134-216 form a CR-type zinc finger; that stretch reads GTEKEISIRK…CHGKGTETKN (83 aa). 8 residues coordinate Zn(2+): Cys-147, Cys-150, Cys-164, Cys-167, Cys-190, Cys-193, Cys-204, and Cys-207. CXXCXGXG motif repeat units follow at residues 147 to 154, 164 to 171, 190 to 197, and 204 to 211; these read CETCDGSG, CHYCNGSG, CPVCNGTG, and CPTCHGKG.

This sequence belongs to the DnaJ family. Homodimer. It depends on Zn(2+) as a cofactor.

Its subcellular location is the cytoplasm. Participates actively in the response to hyperosmotic and heat shock by preventing the aggregation of stress-denatured proteins and by disaggregating proteins, also in an autonomous, DnaK-independent fashion. Unfolded proteins bind initially to DnaJ; upon interaction with the DnaJ-bound protein, DnaK hydrolyzes its bound ATP, resulting in the formation of a stable complex. GrpE releases ADP from DnaK; ATP binding to DnaK triggers the release of the substrate protein, thus completing the reaction cycle. Several rounds of ATP-dependent interactions between DnaJ, DnaK and GrpE are required for fully efficient folding. Also involved, together with DnaK and GrpE, in the DNA replication of plasmids through activation of initiation proteins. The chain is Chaperone protein DnaJ from Staphylococcus carnosus (strain TM300).